Consider the following 730-residue polypeptide: Aspyridones cluster regulator apdR (730 aa).

The zn(2)-C6 fungal-type DNA-binding region spans 20-46 (CTECRRRKIRCDQATPCRHCEKAALRC).

The protein localises to the nucleus. In terms of biological role, transcription factor involved in regulation of gene cluster that mediates the biosynthesis of aspyridones. This Emericella nidulans (strain FGSC A4 / ATCC 38163 / CBS 112.46 / NRRL 194 / M139) (Aspergillus nidulans) protein is Aspyridones cluster regulator apdR.